The sequence spans 519 residues: Cysteine--tRNA ligase (519 aa).

Zn(2+) is bound at residue Cys-30. The 'HIGH' region signature appears at 32-42 (PTVYDRAHLGN). Cys-221, His-253, and Glu-257 together coordinate Zn(2+). The 'KMSKS' region signature appears at 286 to 290 (KMSKS). Lys-289 is a binding site for ATP.

Belongs to the class-I aminoacyl-tRNA synthetase family. As to quaternary structure, monomer. Zn(2+) serves as cofactor.

It localises to the cytoplasm. It carries out the reaction tRNA(Cys) + L-cysteine + ATP = L-cysteinyl-tRNA(Cys) + AMP + diphosphate. This is Cysteine--tRNA ligase from Cereibacter sphaeroides (strain KD131 / KCTC 12085) (Rhodobacter sphaeroides).